Consider the following 73-residue polypeptide: DNA-directed RNA polymerase subunit Rpo10 (73 aa).

The Zn(2+) site is built by Cys7, Cys10, Cys44, and Cys45.

Belongs to the archaeal Rpo10/eukaryotic RPB10 RNA polymerase subunit family. Part of the RNA polymerase complex. Forms an Rpo3-Rpo10-Rpo11-Rpo12 complex upon coexpression. The cofactor is Zn(2+).

Its subcellular location is the cytoplasm. It carries out the reaction RNA(n) + a ribonucleoside 5'-triphosphate = RNA(n+1) + diphosphate. DNA-dependent RNA polymerase (RNAP) catalyzes the transcription of DNA into RNA using the four ribonucleoside triphosphates as substrates. This Methanocaldococcus jannaschii (strain ATCC 43067 / DSM 2661 / JAL-1 / JCM 10045 / NBRC 100440) (Methanococcus jannaschii) protein is DNA-directed RNA polymerase subunit Rpo10.